A 170-amino-acid polypeptide reads, in one-letter code: Neurotensin/neuromedin N (170 aa).

Positions 1–23 (MMAGMKIQLVCMILLAFSSWSLC) are cleaved as a signal peptide.

The protein belongs to the neurotensin family. As to quaternary structure, interacts with NTSR1. Interacts with SORT1. Interacts with SORL1. Neurotensin is cleaved and degraded by Angiotensin-converting enzyme (ACE) and neprilysin (MME).

It localises to the secreted. It is found in the cytoplasmic vesicle. Its subcellular location is the secretory vesicle. Neurotensin may play an endocrine or paracrine role in the regulation of fat metabolism. It causes contraction of smooth muscle. The sequence is that of Neurotensin/neuromedin N (NTS) from Canis lupus familiaris (Dog).